Here is a 95-residue protein sequence, read N- to C-terminus: Co-chaperonin GroES (95 aa).

This sequence belongs to the GroES chaperonin family. Heptamer of 7 subunits arranged in a ring. Interacts with the chaperonin GroEL.

The protein localises to the cytoplasm. In terms of biological role, together with the chaperonin GroEL, plays an essential role in assisting protein folding. The GroEL-GroES system forms a nano-cage that allows encapsulation of the non-native substrate proteins and provides a physical environment optimized to promote and accelerate protein folding. GroES binds to the apical surface of the GroEL ring, thereby capping the opening of the GroEL channel. This Jannaschia sp. (strain CCS1) protein is Co-chaperonin GroES.